We begin with the raw amino-acid sequence, 96 residues long: Large ribosomal subunit protein bL27 (96 aa).

Positions 1 to 9 (MLRLDLQFF) are excised as a propeptide. Residues 14–35 (GVGSTKNGRDSQSKRLGAKRAD) are disordered.

The protein belongs to the bacterial ribosomal protein bL27 family. Post-translationally, the N-terminus is cleaved by ribosomal processing cysteine protease Prp.

The polypeptide is Large ribosomal subunit protein bL27 (Bacillus cytotoxicus (strain DSM 22905 / CIP 110041 / 391-98 / NVH 391-98)).